We begin with the raw amino-acid sequence, 150 residues long: Ribonuclease H (150 aa).

One can recognise an RNase H type-1 domain in the interval 1 to 142; that stretch reads MSDSVEIFTD…ADQLANRGVD (142 aa). Positions 10, 48, 70, and 134 each coordinate Mg(2+).

Belongs to the RNase H family. Monomer. It depends on Mg(2+) as a cofactor.

It is found in the cytoplasm. The enzyme catalyses Endonucleolytic cleavage to 5'-phosphomonoester.. In terms of biological role, endonuclease that specifically degrades the RNA of RNA-DNA hybrids. This chain is Ribonuclease H, found in Pseudomonas fluorescens (strain ATCC BAA-477 / NRRL B-23932 / Pf-5).